We begin with the raw amino-acid sequence, 552 residues long: Cytochrome P450 monooxyhenase eriI (552 aa).

A helical membrane pass occupies residues 9–26 (FALKASAAVAVLLLAAWV). 2 N-linked (GlcNAc...) asparagine glycosylation sites follow: asparagine 50 and asparagine 447. Cysteine 495 is a heme binding site.

The protein belongs to the cytochrome P450 family. Heme is required as a cofactor.

Its subcellular location is the membrane. The catalysed reaction is (-)-cyatha-3,12-diene + reduced [NADPH--hemoprotein reductase] + O2 = erinacol + oxidized [NADPH--hemoprotein reductase] + H2O + H(+). The protein operates within secondary metabolite biosynthesis. Functionally, cytochrome P450 monooxygenase; part of the gene cluster that mediates the biosynthesis of erinacines, cyathane-xylosides that show unique biological activities, including leishmanicidal activity, stimulating activity for nerve growth-factor synthesis, and agonistic activity toward the kappa opioid receptor. Within the pathway, eriI hydroxylates cyatha-3,12-diene at C-14 of the seven-membered ring to yield erinacol. The first step of the erinacines biosynthesis pathway is catalyzed by the geranylgeranyl diphosphate (GGPP) synthase eriE via conversion of farnesyl pyrophosphate and isopentyl pyrophosphate into geranylgeranyl pyrophosphate (GGPP). GGPP is then substrate of the diterpene cyclase eriG for the production of cyatha-3,12-diene. The cytochrome P450 monooxygenase eriI then hydroxylates cyatha-3,12-diene at C-14 of the seven-membered ring to produce erinacol, which is further hydroxylated at C-15 by the cytochrome P450 monooxygenase eriC to yield cyathadiol. The cytochrome P450 monooxygenase eriA then catalyzes C-11 hydroxylation in the presence of the short chain dehydrogenase/reductase (SDR) eriH, which leads to the production of cyathatriol. The acetyltransferase eriL converts cyathatriol into 11-O-acetyl-cyathatriol. The SDR eriH catalyzes further oxidation of 11-O-acetyl-cyathatriol into 1-O-acetylcyathin A3. Finally, the glycosyl transferase eriJ tranfers xylose from UDP-xylose onto C-14 of 11-O-acetyl-cyathatriol to form eracine Q. EriJ is also able to convert 11-O-acetyl-cyathatriol to eracine Q2 by using UDP-D-glucose as cosubstrate, but at a lower rate. Its function is as follows. Cytochrome P450 monooxygenase; part of the gene cluster that mediates the biosynthesis of erinacines, cyathane-xylosides that show unique biological activities, including leishmanicidal activity, stimulating activity for nerve growth-factor synthesis, and agonistic activity toward the kappa opioid receptor. The geranylgeranyl diphosphate (GGPP) synthase eriE catalyzes the first step in erinacines biosynthesis via conversion of farnesyl pyrophosphate and isopentyl pyrophosphate into geranylgeranyl pyrophosphate (GGPP). GGPP is then substrate of the diterpene cyclase eriG for the production of cyatha-3,12-diene. EriG is unable to use geranyl diphosphate (GPP) or farnesyl diphosphate (FPP) as substrates. The cytochrome P450 monooxygenase eriI then hydroxylates cyatha-3,12-diene at C-14 of the seven-membered ring to produce erinacol, which is further hydroxylated at C-15 by the cytochrome P450 monooxygenase eriC to yield cyathadiol. The cytochrome P450 monooxygenase eriA then catalyzes C-11 hydroxylation in the presence of the short chain dehydrogenase/reductase (SDR) eriH, which leads to the production of cyathatriol. The acetyltransferase eriL converts cyathatriol into 11-O-acetyl-cyathatriol. The SDR eriH catalyzes further oxidation of 11-O-acetyl-cyathatriol into 1-O-acetylcyathin A3. Finally, the glycosyl transferase eriJ tranfers xylose from UDP-xylose onto C-14 of 11-O-acetyl-cyathatriol to form eracine Q. EriJ is also able to convert 11-O-acetyl-cyathatriol to eracine Q2 by using UDP-D-glucose as cosubstrate, but at a lower rate. In the absence of eriL and eriJ, the SDR eriH is able to convert cyathatriol to cyathin A3; this is likely a switching mechanism in the biosynthesis of cyathins (C-14 ketogroup)and erinacines (C-14 glycosylated group). The roles of the SDR eriB, the polyprenyl transferase eriF and the dehydrogenase eriK have still to be identified. In Hericium erinaceus (Lion's mane mushroom), this protein is Cytochrome P450 monooxyhenase eriI.